Here is a 282-residue protein sequence, read N- to C-terminus: L-allo-isoleucyltransferase (282 aa).

Cys-105 serves as the catalytic Acyl-thioester intermediate. Residues 169 to 261 (HTQSTYTPSD…DGQHHDFVDG (93 aa)) form the AB hydrolase-1 domain.

It belongs to the AB hydrolase superfamily.

It catalyses the reaction holo-[CmaD peptidyl-carrier protein] + L-alloisoleucyl-[CmaA peptidyl-carrier protein] = L-alloisoleucyl-[CmaD peptidyl-carrier protein] + holo-[CmaA peptidyl-carrier protein]. Its function is as follows. Involved in the biosynthesis of the phytotoxin coronatine (COR). Catalyzes the transfer of the aminoacyl group covalently attached to the pantetheinyl arm of CmaA to the holo-pantetheinyl arm of CmaD. During the shuttling process, CmaE generates a covalent-aminoacyl-S-Cys enzyme intermediate by the action of its donor substrate L-aminoacyl-S-CmaA and delivers it to the sulfhydryl group attached to the phosphopantetheinyl arm on CmaD. The polypeptide is L-allo-isoleucyltransferase (Pseudomonas savastanoi pv. glycinea (Pseudomonas syringae pv. glycinea)).